The sequence spans 441 residues: Arginine biosynthesis bifunctional protein ArgJ, mitochondrial (441 aa).

Residues 1–8 constitute a mitochondrion transit peptide; that stretch reads MRISSTLL. 6 residues coordinate substrate: Thr-177, Lys-204, Thr-215, Glu-301, Asn-436, and Ser-441. Residue Thr-215 is the Nucleophile of the active site.

Belongs to the ArgJ family. As to quaternary structure, heterodimer of an alpha and a beta chain. Post-translationally, the alpha and beta chains are autoproteolytically processed from a single precursor protein within the mitochondrion.

It is found in the mitochondrion matrix. The catalysed reaction is N(2)-acetyl-L-ornithine + L-glutamate = N-acetyl-L-glutamate + L-ornithine. It carries out the reaction L-glutamate + acetyl-CoA = N-acetyl-L-glutamate + CoA + H(+). It participates in amino-acid biosynthesis; L-arginine biosynthesis; L-ornithine and N-acetyl-L-glutamate from L-glutamate and N(2)-acetyl-L-ornithine (cyclic): step 1/1. It functions in the pathway amino-acid biosynthesis; L-arginine biosynthesis; N(2)-acetyl-L-ornithine from L-glutamate: step 1/4. Inhibited by ornithine. Catalyzes two activities which are involved in the cyclic version of arginine biosynthesis: the synthesis of acetylglutamate from glutamate and acetyl-CoA, and of ornithine by transacetylation between acetylornithine and glutamate. The polypeptide is Arginine biosynthesis bifunctional protein ArgJ, mitochondrial (Saccharomyces cerevisiae (strain ATCC 204508 / S288c) (Baker's yeast)).